A 248-amino-acid chain; its full sequence is Ribosomal RNA small subunit methyltransferase J (248 aa).

S-adenosyl-L-methionine contacts are provided by residues 101–102 (RD), 117–118 (ER), 153–154 (SS), and Asp171.

It belongs to the methyltransferase superfamily. RsmJ family.

The protein localises to the cytoplasm. It carries out the reaction guanosine(1516) in 16S rRNA + S-adenosyl-L-methionine = N(2)-methylguanosine(1516) in 16S rRNA + S-adenosyl-L-homocysteine + H(+). Specifically methylates the guanosine in position 1516 of 16S rRNA. This is Ribosomal RNA small subunit methyltransferase J from Serratia proteamaculans (strain 568).